The sequence spans 309 residues: Aspartate carbamoyltransferase catalytic subunit (309 aa).

2 residues coordinate carbamoyl phosphate: Arg-59 and Thr-60. Residue Lys-87 coordinates L-aspartate. Positions 109, 139, and 142 each coordinate carbamoyl phosphate. L-aspartate-binding residues include Arg-172 and Arg-224. 2 residues coordinate carbamoyl phosphate: Ala-265 and Pro-266.

It belongs to the aspartate/ornithine carbamoyltransferase superfamily. ATCase family. In terms of assembly, heterododecamer (2C3:3R2) of six catalytic PyrB chains organized as two trimers (C3), and six regulatory PyrI chains organized as three dimers (R2).

The catalysed reaction is carbamoyl phosphate + L-aspartate = N-carbamoyl-L-aspartate + phosphate + H(+). It participates in pyrimidine metabolism; UMP biosynthesis via de novo pathway; (S)-dihydroorotate from bicarbonate: step 2/3. Functionally, catalyzes the condensation of carbamoyl phosphate and aspartate to form carbamoyl aspartate and inorganic phosphate, the committed step in the de novo pyrimidine nucleotide biosynthesis pathway. The protein is Aspartate carbamoyltransferase catalytic subunit of Streptococcus uberis (strain ATCC BAA-854 / 0140J).